A 274-amino-acid chain; its full sequence is Thiamine kinase (274 aa).

The protein belongs to the thiamine kinase family.

It carries out the reaction thiamine + ATP = thiamine phosphate + ADP + H(+). It functions in the pathway cofactor biosynthesis; thiamine diphosphate biosynthesis; thiamine phosphate from thiamine: step 1/1. Functionally, catalyzes the ATP-dependent phosphorylation of thiamine to thiamine phosphate. Is involved in thiamine salvage. In Salmonella typhi, this protein is Thiamine kinase.